The sequence spans 148 residues: 3-hydroxyacyl-[acyl-carrier-protein] dehydratase FabZ (148 aa).

Histidine 48 is an active-site residue.

The protein belongs to the thioester dehydratase family. FabZ subfamily.

It localises to the cytoplasm. It carries out the reaction a (3R)-hydroxyacyl-[ACP] = a (2E)-enoyl-[ACP] + H2O. In terms of biological role, involved in unsaturated fatty acids biosynthesis. Catalyzes the dehydration of short chain beta-hydroxyacyl-ACPs and long chain saturated and unsaturated beta-hydroxyacyl-ACPs. This Campylobacter curvus (strain 525.92) protein is 3-hydroxyacyl-[acyl-carrier-protein] dehydratase FabZ.